The primary structure comprises 226 residues: Leucyl/phenylalanyl-tRNA--protein transferase (226 aa).

It belongs to the L/F-transferase family.

It localises to the cytoplasm. It carries out the reaction N-terminal L-lysyl-[protein] + L-leucyl-tRNA(Leu) = N-terminal L-leucyl-L-lysyl-[protein] + tRNA(Leu) + H(+). It catalyses the reaction N-terminal L-arginyl-[protein] + L-leucyl-tRNA(Leu) = N-terminal L-leucyl-L-arginyl-[protein] + tRNA(Leu) + H(+). The enzyme catalyses L-phenylalanyl-tRNA(Phe) + an N-terminal L-alpha-aminoacyl-[protein] = an N-terminal L-phenylalanyl-L-alpha-aminoacyl-[protein] + tRNA(Phe). In terms of biological role, functions in the N-end rule pathway of protein degradation where it conjugates Leu, Phe and, less efficiently, Met from aminoacyl-tRNAs to the N-termini of proteins containing an N-terminal arginine or lysine. This Pseudomonas aeruginosa (strain ATCC 15692 / DSM 22644 / CIP 104116 / JCM 14847 / LMG 12228 / 1C / PRS 101 / PAO1) protein is Leucyl/phenylalanyl-tRNA--protein transferase.